The sequence spans 313 residues: Probable cytochrome c oxidase subunit 2 (313 aa).

In terms of domain architecture, RPE1 insert spans 5–51 (RYWSKQSYKKLKVDQEHNTTEYTNVCNSTSLGSTYTLPLKMELWKIY). Transmembrane regions (helical) follow at residues 39–59 (YTLP…YFLI), 94–114 (LLYI…FVCI), and 131–151 (LLIE…IAVP). Cu cation-binding residues include H233, C268, C272, and H276.

Belongs to the cytochrome c oxidase subunit 2 family. The cofactor is Cu cation. Heme serves as cofactor.

The protein localises to the cell membrane. It carries out the reaction 4 Fe(II)-[cytochrome c] + O2 + 8 H(+)(in) = 4 Fe(III)-[cytochrome c] + 2 H2O + 4 H(+)(out). Subunits I and II form the functional core of the enzyme complex. Electrons originating in cytochrome c are transferred via heme a and Cu(A) to the binuclear center formed by heme a3 and Cu(B). The protein is Probable cytochrome c oxidase subunit 2 (ctaC) of Rickettsia prowazekii (strain Madrid E).